Here is a 308-residue protein sequence, read N- to C-terminus: Ceramide synthase 1 LOH3 (308 aa).

A run of 6 helical transmembrane segments spans residues 25-45 (VLPLFAVFFPSIRFLLDRFVF), 82-102 (CVYYLSAEILALSVTYNEPWF), 128-148 (LLYMFVAGFYTYSIFALVFWE), 154-174 (FGVSMGHHIATLILIVLSYVC), 213-233 (FILFVLSWIILRLIYYPFWIL), and 258-278 (YMFNTLLYCLLVLHIYWWVLM). The TLC domain maps to 73–287 (RKFKESAWKC…MYRMLVKQIQ (215 aa)). 2 positions are modified to phosphoserine: serine 298 and serine 300.

In terms of tissue distribution, expressed ubiquitously at low levels. Not observed in pollen.

It localises to the endoplasmic reticulum membrane. The enzyme catalyses (4R)-hydroxysphinganine + a fatty acyl-CoA = an N-acyl-(4R)-4-hydroxysphinganine + CoA + H(+). The catalysed reaction is a sphingoid base + tetracosanoyl-CoA = an N-tetracosanoyl-sphingoid base + CoA + H(+). It carries out the reaction (4R)-hydroxysphinganine + hexadecanoyl-CoA = N-hexadecanoyl-(4R)-hydroxysphinganine + CoA + H(+). It catalyses the reaction (4R)-hydroxysphinganine + octadecanoyl-CoA = N-octadecanoyl-(4R)-hydroxysphinganine + CoA + H(+). The enzyme catalyses (4R)-hydroxysphinganine + eicosanoyl-CoA = N-eicosanoyl-(4R)-hydroxysphinganine + CoA + H(+). The catalysed reaction is docosanoyl-CoA + (4R)-hydroxysphinganine = N-docosanoyl-(4R)-hydroxysphinganine + CoA + H(+). It carries out the reaction hexacosanoyl-CoA + (4R)-hydroxysphinganine = N-hexacosanoyl-(4R)-hydroxysphinganine + CoA + H(+). It catalyses the reaction tetracosanoyl-CoA + (4R)-hydroxysphinganine = N-tetracosanoyl-(4R)-hydroxysphinganine + CoA + H(+). The enzyme catalyses tetracosanoyl-CoA + sphing-4-enine = N-tetracosanoyl-sphing-4-enine + CoA + H(+). The catalysed reaction is sphinga-(4E,8Z)-dienine + tetracosanoyl-CoA = N-tetracosanoylsphinga-(4E,8Z)-dienine + CoA + H(+). It carries out the reaction sphinga-(4E,8E)-dienine + tetracosanoyl-CoA = N-tetracosanoylsphinga-(4E,8E)-dienine + CoA + H(+). It catalyses the reaction (4R)-hydroxysphing-(8Z)-enine + tetracosanoyl-CoA = N-tetracosanoyl-(4R)-hydroxysphing-(8Z)-enine + CoA + H(+). The enzyme catalyses (4R)-hydroxysphing-(8E)-enine + tetracosanoyl-CoA = N-tetracosanoyl-(4R)-hydroxysphing-(8E)-enine + CoA + H(+). It participates in sphingolipid metabolism. Inhibited by the mycotoxin fumonisin B(1), a sphingosine analog mycotoxins produced by pathogenic fungi. Repressed by divalent cation such as magnesium Mg(2+), copper Cu(2+), zinc Zn(2+), manganese Mn(2+), calcium Ca(2+) and cobalt Co(2+). Functionally, essential for plant growth, promotes cell division in root meristems. Catalyzes the biosynthesis of ceramide sphingolipids with C(16) to C(28) fatty acids, structural membrane lipids involved in membrane trafficking (e.g. early endosomes) and cell polarity (e.g. polar auxin transport related proteins); active on a broad substrate spectrum, both regarding chain lengths of fatty acids and the sphingoid base, such as long-chain base (LCB) phytosphingosine (t18:0). Mediates resistance to sphinganine-analog mycotoxins (SAMs, e.g. fumonisin B(1)) by restoring the sphingolipid biosynthesis. Could salvage the transport of GPI-anchored proteins from the endoplasmic reticulum to the Golgi apparatus in ceramides-depleted cells after SAM exposure. Contributes to hypoxic conditions tolerance (e.g. submergences), especially in the dark, by promoting the formation of very-long-chain (VLC) ceramide species (22:1, 24:1 and 26:1) and of VLC unsaturated ceramides, which are modulating CTR1-mediated ethylene signaling leading to endoplasmic reticulum (ER)-to-nucleus translocation of EIN2 and EIN3. The polypeptide is Ceramide synthase 1 LOH3 (Arabidopsis thaliana (Mouse-ear cress)).